Reading from the N-terminus, the 254-residue chain is Esterase YbfF (254 aa).

Residues S89 and H234 contribute to the active site.

The protein belongs to the DmpD/TodF/XylF esterase family.

Functionally, displays esterase activity toward palmitoyl-CoA, malonyl-CoA and pNP-butyrate. The protein is Esterase YbfF (ybfF) of Escherichia coli (strain K12).